The chain runs to 366 residues: MSGNTFGTLFTVTSFGESHGPAIGCVVDGCPPGLALCEADIQAELDRRKPGTSRHVTQRREPDTVEILSGVFEGKTTGTPIGLLIRNQDQRSKDYGNIADTFRPGHADYAYTQKYGFRDYRGGGRSSARETAVRVAAGAIARKWLHERFGVAIRGWMSALGPIEIPFVSADAIDGNAFFAPNSAIVPELEAYMDKLRKSLDSVGAKITVTATGVPPGWGEPVYDRLDAEIAYAMMGINAVKGVEIGAGFDSVAQKGSEHGDEMTPQGFATNHAGGVLGGISTGQEIVVNMAIKPTSSIAQSRRSINRQGEAIEVATEGRHDPCVGIRATPIAEAMLALVLMDHALRHRAQCGDVLCATPRIPGKIA.

The NADP(+) site is built by Arg48 and Arg54. Residues 125–127 (RSS), 238–239 (NA), Gly278, 293–297 (KPTSS), and Arg319 contribute to the FMN site.

The protein belongs to the chorismate synthase family. In terms of assembly, homotetramer. The cofactor is FMNH2.

It catalyses the reaction 5-O-(1-carboxyvinyl)-3-phosphoshikimate = chorismate + phosphate. It functions in the pathway metabolic intermediate biosynthesis; chorismate biosynthesis; chorismate from D-erythrose 4-phosphate and phosphoenolpyruvate: step 7/7. Its function is as follows. Catalyzes the anti-1,4-elimination of the C-3 phosphate and the C-6 proR hydrogen from 5-enolpyruvylshikimate-3-phosphate (EPSP) to yield chorismate, which is the branch point compound that serves as the starting substrate for the three terminal pathways of aromatic amino acid biosynthesis. This reaction introduces a second double bond into the aromatic ring system. This Dechloromonas aromatica (strain RCB) protein is Chorismate synthase.